We begin with the raw amino-acid sequence, 184 residues long: MSLERAVRAKIASKRNPEMDKEAQEWIEAIIAEKFPAGQSYEDVLKDGQVLCKLINVLSPNAVPKVNSSGGQFKFMENINNFQKALKEYGVPDIDVFQTVDLYEKKDIANVTNTIFALGRATYKHADFKGPFLGPKPADECKRDFTEEQLKAGQTIVGLQAGSNKGATQAGQNLGAGRKILLGK.

The Calponin-homology (CH) domain maps to 17-122 (PEMDKEAQEW…NTIFALGRAT (106 aa)). One copy of the Calponin-like repeat lies at 157–181 (VGLQAGSNKGATQAGQNLGAGRKIL).

The protein belongs to the calponin family. In terms of tissue distribution, found in synchronous muscle; not found in asynchronous indirect flight muscle.

The sequence is that of Muscle-specific protein 20 (Mp20) from Drosophila melanogaster (Fruit fly).